We begin with the raw amino-acid sequence, 220 residues long: Thiamine-phosphate synthase (220 aa).

4-amino-2-methyl-5-(diphosphooxymethyl)pyrimidine contacts are provided by residues 39–43 (QLRDK) and Asn80. Residues Asp81 and Asp100 each coordinate Mg(2+). Ser119 is a binding site for 4-amino-2-methyl-5-(diphosphooxymethyl)pyrimidine. 2-[(2R,5Z)-2-carboxy-4-methylthiazol-5(2H)-ylidene]ethyl phosphate is bound at residue 145–147 (TPT). 4-amino-2-methyl-5-(diphosphooxymethyl)pyrimidine is bound at residue Lys148. Gly176 provides a ligand contact to 2-[(2R,5Z)-2-carboxy-4-methylthiazol-5(2H)-ylidene]ethyl phosphate.

The protein belongs to the thiamine-phosphate synthase family. The cofactor is Mg(2+).

The catalysed reaction is 2-[(2R,5Z)-2-carboxy-4-methylthiazol-5(2H)-ylidene]ethyl phosphate + 4-amino-2-methyl-5-(diphosphooxymethyl)pyrimidine + 2 H(+) = thiamine phosphate + CO2 + diphosphate. It carries out the reaction 2-(2-carboxy-4-methylthiazol-5-yl)ethyl phosphate + 4-amino-2-methyl-5-(diphosphooxymethyl)pyrimidine + 2 H(+) = thiamine phosphate + CO2 + diphosphate. The enzyme catalyses 4-methyl-5-(2-phosphooxyethyl)-thiazole + 4-amino-2-methyl-5-(diphosphooxymethyl)pyrimidine + H(+) = thiamine phosphate + diphosphate. It functions in the pathway cofactor biosynthesis; thiamine diphosphate biosynthesis; thiamine phosphate from 4-amino-2-methyl-5-diphosphomethylpyrimidine and 4-methyl-5-(2-phosphoethyl)-thiazole: step 1/1. Condenses 4-methyl-5-(beta-hydroxyethyl)thiazole monophosphate (THZ-P) and 2-methyl-4-amino-5-hydroxymethyl pyrimidine pyrophosphate (HMP-PP) to form thiamine monophosphate (TMP). The sequence is that of Thiamine-phosphate synthase from Mycobacterium marinum (strain ATCC BAA-535 / M).